Here is a 91-residue protein sequence, read N- to C-terminus: PqqA binding protein (91 aa).

The protein belongs to the PqqD family. Monomer. Interacts with PqqE.

It functions in the pathway cofactor biosynthesis; pyrroloquinoline quinone biosynthesis. In terms of biological role, functions as a PqqA binding protein and presents PqqA to PqqE, in the pyrroloquinoline quinone (PQQ) biosynthetic pathway. This is PqqA binding protein from Pseudomonas entomophila (strain L48).